Here is a 320-residue protein sequence, read N- to C-terminus: Dermonecrotic toxin LarSicTox-alphaIB2a (320 aa).

The N-terminal stretch at 1–15 is a signal peptide; sequence MSHSSTALLHPYVAA. A propeptide spanning residues 16–41 is cleaved from the precursor; that stretch reads RATEKFAPIYFFCHPLQSAETDVAER. The active site involves His-52. 2 residues coordinate Mg(2+): Glu-72 and Asp-74. His-88 acts as the Nucleophile in catalysis. 2 cysteine pairs are disulfide-bonded: Cys-92–Cys-98 and Cys-94–Cys-237. Asp-132 serves as a coordination point for Mg(2+). The N-linked (GlcNAc...) asparagine glycan is linked to Asn-297.

Belongs to the arthropod phospholipase D family. Class II subfamily. The cofactor is Mg(2+). As to expression, expressed by the venom gland.

The protein localises to the secreted. It catalyses the reaction an N-(acyl)-sphingosylphosphocholine = an N-(acyl)-sphingosyl-1,3-cyclic phosphate + choline. It carries out the reaction an N-(acyl)-sphingosylphosphoethanolamine = an N-(acyl)-sphingosyl-1,3-cyclic phosphate + ethanolamine. The catalysed reaction is a 1-acyl-sn-glycero-3-phosphocholine = a 1-acyl-sn-glycero-2,3-cyclic phosphate + choline. The enzyme catalyses a 1-acyl-sn-glycero-3-phosphoethanolamine = a 1-acyl-sn-glycero-2,3-cyclic phosphate + ethanolamine. Its function is as follows. Dermonecrotic toxins cleave the phosphodiester linkage between the phosphate and headgroup of certain phospholipids (sphingolipid and lysolipid substrates), forming an alcohol (often choline) and a cyclic phosphate. This toxin acts on sphingomyelin (SM). It may also act on ceramide phosphoethanolamine (CPE), lysophosphatidylcholine (LPC) and lysophosphatidylethanolamine (LPE), but not on lysophosphatidylserine (LPS), and lysophosphatidylglycerol (LPG). It acts by transphosphatidylation, releasing exclusively cyclic phosphate products as second products. Induces dermonecrosis, hemolysis, increased vascular permeability, edema, inflammatory response, and platelet aggregation. The polypeptide is Dermonecrotic toxin LarSicTox-alphaIB2a (Loxosceles arizonica (Arizona brown spider)).